Here is a 205-residue protein sequence, read N- to C-terminus: D-alanine--D-alanine ligase (205 aa).

The ATP-grasp domain maps to 111-205 (KHVLKSLGID…LGRAIGTMEF (95 aa)). 139-190 (MPYPFVIKPICGGSTIGVHAIFSRSEYLDLSVHADALEGRMLVEEYIPGQEV) serves as a coordination point for ATP.

It belongs to the D-alanine--D-alanine ligase family. It depends on Mg(2+) as a cofactor. Requires Mn(2+) as cofactor.

The protein resides in the cytoplasm. The catalysed reaction is 2 D-alanine + ATP = D-alanyl-D-alanine + ADP + phosphate + H(+). The protein operates within cell wall biogenesis; peptidoglycan biosynthesis. Its function is as follows. Cell wall formation. The sequence is that of D-alanine--D-alanine ligase (ddl) from Anaplasma centrale.